The sequence spans 381 residues: MSKPAILALEDGSVFHGTAIGADGQTSGEVVFNTAMTGYQEILTDPSYSRQIVTLTYPHIGNTGVNSEDVESSSIAAAGLVIRDLPLLASSFRCEQSLSDYLAQQNVLGIADMHTRRLTRLLRDKGSQNGAILAGPDAEGEDAEARALEAARAFPGLKGMDLAKVVSCAEPYEWSEGEWTLGSGYADVSQGDRPYHVVAYDYGMKRNILRMLAARGCRLTVVPAQTPAEEVLAMNPDGIFLSNGPGDPEPCDYAISAIQAFLETEIPVFGICLGHQLLALASGAQTVKMNHGHHGANHPVQDLDSGRVMITSQNHGFAVEESTLPDNLRAIHRSLFDGTLQGIERTDRPAFSFQGHPEASPGPRDVAPLFDRFVEMMRHRR.

Residues Met1 to Asp192 form a CPSase region. L-glutamine contacts are provided by Ser47, Gly244, and Gly246. Residues His196–Arg381 enclose the Glutamine amidotransferase type-1 domain. The active-site Nucleophile is the Cys272. The L-glutamine site is built by Leu273, Gln276, Asn314, Gly316, and Phe317. Active-site residues include His356 and Glu358.

The protein belongs to the CarA family. As to quaternary structure, composed of two chains; the small (or glutamine) chain promotes the hydrolysis of glutamine to ammonia, which is used by the large (or ammonia) chain to synthesize carbamoyl phosphate. Tetramer of heterodimers (alpha,beta)4.

It catalyses the reaction hydrogencarbonate + L-glutamine + 2 ATP + H2O = carbamoyl phosphate + L-glutamate + 2 ADP + phosphate + 2 H(+). It carries out the reaction L-glutamine + H2O = L-glutamate + NH4(+). It functions in the pathway amino-acid biosynthesis; L-arginine biosynthesis; carbamoyl phosphate from bicarbonate: step 1/1. It participates in pyrimidine metabolism; UMP biosynthesis via de novo pathway; (S)-dihydroorotate from bicarbonate: step 1/3. Functionally, small subunit of the glutamine-dependent carbamoyl phosphate synthetase (CPSase). CPSase catalyzes the formation of carbamoyl phosphate from the ammonia moiety of glutamine, carbonate, and phosphate donated by ATP, constituting the first step of 2 biosynthetic pathways, one leading to arginine and/or urea and the other to pyrimidine nucleotides. The small subunit (glutamine amidotransferase) binds and cleaves glutamine to supply the large subunit with the substrate ammonia. In Halomonas eurihalina, this protein is Carbamoyl phosphate synthase small chain.